Reading from the N-terminus, the 77-residue chain is Large ribosomal subunit protein uL29 (77 aa).

This sequence belongs to the universal ribosomal protein uL29 family.

This Cutibacterium acnes (strain DSM 16379 / KPA171202) (Propionibacterium acnes) protein is Large ribosomal subunit protein uL29.